The sequence spans 674 residues: Secretin GspD (674 aa).

An N-terminal signal peptide occupies residues 1-24; it reads MKYWLKKSSWLLAGSLLSTPLAMA. The tract at residues 25–121 is N0; the sequence is NEFSASFKGT…VLSGEERANG (97 aa). An N1 region spans residues 123–187; the sequence is EVITQVVAVK…EIIRRVDQAG (65 aa). Residues 188 to 261 form an N2 region; that stretch reads DKEIEVVELN…LIKQLDVEMA (74 aa). The N3 stretch occupies residues 264 to 338; it reads GNNRVVYLKY…AMLEVIGQLD (75 aa). Residues 343 to 612 form a secretin region; it reads QVLIEALIVE…VFIKPTIIRD (270 aa). A cap gate region spans residues 395–417; sequence DTTQTKAVYDTNNNFLRNETTTT. The s domain stretch occupies residues 614–674; sequence VTADGITQRK…AFIEQMEAKQ (61 aa).

The protein belongs to the bacterial secretin family. GSP D subfamily. In terms of assembly, forms a cylindrical channel with 15 subunits; unlike E.coli no 16-subunit channels are seen. The closed pentadeacameric channels are 195 Angstroms long and 145 Angstroms in diameter. Each subunit turns in a clock-wise manner around the channel.

It is found in the cell outer membrane. Its function is as follows. Involved in a type II secretion system (T2SS, formerly general secretion pathway, GSP) for the export of proteins. Required for secretion of cholera toxin through the outer membrane. This subunit forms the outer membrane channel. This is Secretin GspD (epsD) from Vibrio cholerae serotype O1 (strain ATCC 39315 / El Tor Inaba N16961).